The chain runs to 383 residues: Acetylornithine deacetylase (383 aa).

Position 80 (histidine 80) interacts with Zn(2+). Aspartate 82 is an active-site residue. Aspartate 112 is a binding site for Zn(2+). Glutamate 144 is an active-site residue. Zn(2+) contacts are provided by glutamate 145, glutamate 169, and histidine 355.

It belongs to the peptidase M20A family. ArgE subfamily. Homodimer. Zn(2+) is required as a cofactor. The cofactor is Co(2+). Glutathione serves as cofactor.

It localises to the cytoplasm. The catalysed reaction is N(2)-acetyl-L-ornithine + H2O = L-ornithine + acetate. The protein operates within amino-acid biosynthesis; L-arginine biosynthesis; L-ornithine from N(2)-acetyl-L-ornithine (linear): step 1/1. Its function is as follows. Catalyzes the hydrolysis of the amide bond of N(2)-acetylated L-amino acids. Cleaves the acetyl group from N-acetyl-L-ornithine to form L-ornithine, an intermediate in L-arginine biosynthesis pathway, and a branchpoint in the synthesis of polyamines. This chain is Acetylornithine deacetylase, found in Salmonella choleraesuis (strain SC-B67).